The chain runs to 1006 residues: Unconventional myosin-Id (1006 aa).

Alanine 2 is modified (N-acetylalanine). The 687-residue stretch at 9 to 695 folds into the Myosin motor domain; it reads FGKADFVLMD…TLFTLEELRA (687 aa). 102–109 lines the ATP pocket; the sequence is GESGAGKT. Serine 200 bears the Phosphoserine mark. A Phosphotyrosine modification is found at tyrosine 536. The actin-binding stretch occupies residues 572–594; that stretch reads MIALVDNLASKEPYYVRCIKPND. 2 consecutive IQ domains span residues 699–719 and 721–741; these read VRVV…MRYK and TKAA…SYIH. A TH1 domain is found at 812-1005; that stretch reads GQRADLGLQR…RSGFILSVPG (194 aa).

Belongs to the TRAFAC class myosin-kinesin ATPase superfamily. Myosin family. In terms of assembly, interacts (via the two IQ motifs) with calmodulin. Binds an additional calmodulin chain via a third, C-terminal region. Interacts with F-actin. In terms of tissue distribution, detected in enterocytes at the intestinal brush border membrane. Detected at the tip of intestinal microvilli (at protein level).

It localises to the cytoplasm. The protein resides in the perikaryon. Its subcellular location is the cell projection. It is found in the dendrite. The protein localises to the early endosome. It localises to the cell cortex. The protein resides in the basolateral cell membrane. In terms of biological role, unconventional myosin that functions as actin-based motor protein with ATPase activity. Plays a role in endosomal protein trafficking, and especially in the transfer of cargo proteins from early to recycling endosomes. Required for normal planar cell polarity in ciliated tracheal cells, for normal rotational polarity of cilia, and for coordinated, unidirectional ciliary movement in the trachea. Required for normal, polarized cilia organization in brain ependymal epithelial cells. The sequence is that of Unconventional myosin-Id from Mus musculus (Mouse).